A 203-amino-acid chain; its full sequence is Recombination protein RecR (203 aa).

Residues 57-72 (CQRCRTLAETPLCSIC) form a C4-type zinc finger. Residues 80-175 (GLLCVVESPA…RLSRLAYGVP (96 aa)) enclose the Toprim domain.

This sequence belongs to the RecR family.

Functionally, may play a role in DNA repair. It seems to be involved in an RecBC-independent recombinational process of DNA repair. It may act with RecF and RecO. The sequence is that of Recombination protein RecR from Chromohalobacter salexigens (strain ATCC BAA-138 / DSM 3043 / CIP 106854 / NCIMB 13768 / 1H11).